A 434-amino-acid chain; its full sequence is F-box/kelch-repeat protein At1g55270 (434 aa).

One can recognise an F-box domain in the interval 76 to 122 (PPLLPGLPDDLAVACLIRVPRAEHRKLRLVCKRWYRLASGNFFYSQR). 5 Kelch repeats span residues 129-178 (EEWV…VLSG), 180-227 (HLYL…VINN), 229-276 (LYVA…VYDK), 278-321 (WFLK…SLNG), and 325-371 (GLDC…LHNK).

The polypeptide is F-box/kelch-repeat protein At1g55270 (Arabidopsis thaliana (Mouse-ear cress)).